The sequence spans 885 residues: Leucine--tRNA ligase (885 aa).

The 'HIGH' region motif lies at 43–53; that stretch reads PYTSGQLHMGH. The short motif at 571 to 575 is the 'KMSKS' region element; sequence KMSKS. Lysine 574 provides a ligand contact to ATP. The segment at 866–885 is disordered; the sequence is SVANKAEPGRPAIHVDEADD.

This sequence belongs to the class-I aminoacyl-tRNA synthetase family.

The protein resides in the cytoplasm. It carries out the reaction tRNA(Leu) + L-leucine + ATP = L-leucyl-tRNA(Leu) + AMP + diphosphate. This is Leucine--tRNA ligase from Halobacterium salinarum (strain ATCC 700922 / JCM 11081 / NRC-1) (Halobacterium halobium).